The primary structure comprises 510 residues: Cytochrome P450 94B1 (510 aa).

The chain crosses the membrane as a helical span at residues M3 to F23. Residue C450 participates in heme binding.

This sequence belongs to the cytochrome P450 family. It depends on heme as a cofactor.

The protein localises to the membrane. It carries out the reaction a jasmonyl-L-amino acid + reduced [NADPH--hemoprotein reductase] + O2 = a 12-hydroxyjasmonyl-L-alpha-amino acid + oxidized [NADPH--hemoprotein reductase] + H2O + H(+). Hydroxylase involved in the oxidation of the plant hormone jasmonoyl-L-isoleucine (JA-Ile), a bioactive phytohormone of the jasmonate-mediated signaling pathway. Converts JA-Ile to 12-hydroxy-JA-Ile. The protein is Cytochrome P450 94B1 of Arabidopsis thaliana (Mouse-ear cress).